Consider the following 176-residue polypeptide: Nucleoside triphosphate/diphosphate phosphatase (176 aa).

Arg-23 serves as the catalytic Proton donor. Mg(2+) contacts are provided by Asn-87, Asp-103, Asp-105, Asp-107, Asp-120, and Glu-123.

The protein belongs to the Ntdp family. It depends on Mg(2+) as a cofactor.

It catalyses the reaction a ribonucleoside 5'-triphosphate + H2O = a ribonucleoside 5'-diphosphate + phosphate + H(+). It carries out the reaction a ribonucleoside 5'-diphosphate + H2O = a ribonucleoside 5'-phosphate + phosphate + H(+). In terms of biological role, has nucleoside phosphatase activity towards nucleoside triphosphates and nucleoside diphosphates. This chain is Nucleoside triphosphate/diphosphate phosphatase, found in Bacillus velezensis (strain DSM 23117 / BGSC 10A6 / LMG 26770 / FZB42) (Bacillus amyloliquefaciens subsp. plantarum).